We begin with the raw amino-acid sequence, 381 residues long: Chaperone protein DnaJ (381 aa).

Residues 5–70 enclose the J domain; that stretch reads DFYEVLGVGR…QKKAAYDQYG (66 aa). The CR-type zinc-finger motif lies at 136–214; it reads GVSKEIEVPT…CHGQGRKQKT (79 aa). Positions 149, 152, 166, 169, 188, 191, 202, and 205 each coordinate Zn(2+). CXXCXGXG motif repeat units follow at residues 149-156, 166-173, 188-195, and 202-209; these read CDTCDGSG, CGTCHGHG, CPTCHGKG, and CNECHGQG.

It belongs to the DnaJ family. Homodimer. Requires Zn(2+) as cofactor.

Its subcellular location is the cytoplasm. Its function is as follows. Participates actively in the response to hyperosmotic and heat shock by preventing the aggregation of stress-denatured proteins and by disaggregating proteins, also in an autonomous, DnaK-independent fashion. Unfolded proteins bind initially to DnaJ; upon interaction with the DnaJ-bound protein, DnaK hydrolyzes its bound ATP, resulting in the formation of a stable complex. GrpE releases ADP from DnaK; ATP binding to DnaK triggers the release of the substrate protein, thus completing the reaction cycle. Several rounds of ATP-dependent interactions between DnaJ, DnaK and GrpE are required for fully efficient folding. Also involved, together with DnaK and GrpE, in the DNA replication of plasmids through activation of initiation proteins. The protein is Chaperone protein DnaJ of Vibrio campbellii (strain ATCC BAA-1116).